We begin with the raw amino-acid sequence, 590 residues long: 4-oxocyclohex-2-ene-1-carboxylate 5-dehydrogenase (590 aa).

The protein belongs to the FAD-dependent oxidoreductase 2 family. As to quaternary structure, forms multimers. The cofactor is FAD.

It catalyses the reaction 4-oxocyclohex-2-ene-1-carboxylate + NAD(+) = 4-oxocyclohexa-2,5-diene-1-carboxylate + NADH + H(+). Desaturase involved in a cyclohexanecarboxylate (CHCA) degradation pathway. Probably catalyzes the conversion of 4-oxocyclohexenecarboxylate to 4-oxocyclohex-2,5-dienecarboxylate, which is spontaneously isomerized to 4-hydroxybenzoate (4-HBA). The chain is 4-oxocyclohex-2-ene-1-carboxylate 5-dehydrogenase from Sinomonas cyclohexanicum (Corynebacterium cyclohexanicum).